Reading from the N-terminus, the 569-residue chain is Laccase-13 (569 aa).

The N-terminal stretch at 1–21 (MEQLRPFFLLLAIFVASLVNA) is a signal peptide. 2 consecutive Plastocyanin-like domains span residues 29–145 (VIQE…PPLS) and 157–308 (REIT…YKDA). A glycan (N-linked (GlcNAc...) asparagine) is linked at Asn75. 4 residues coordinate Cu cation: His79, His81, His124, and His126. Residues Asn186, Asn296, Asn330, Asn381, Asn391, and Asn432 are each glycosylated (N-linked (GlcNAc...) asparagine). Positions 418–553 (DFPPTPPVTF…AMVFLVENGE (136 aa)) constitute a Plastocyanin-like 3 domain. Residues His470, His473, His475, His532, Cys533, His534, and His538 each coordinate Cu cation.

Belongs to the multicopper oxidase family. Cu cation is required as a cofactor. Mostly expressed in roots. Also detected in leaves, stems and flowers but not in siliques.

The protein resides in the secreted. The protein localises to the extracellular space. Its subcellular location is the apoplast. The enzyme catalyses 4 hydroquinone + O2 = 4 benzosemiquinone + 2 H2O. In terms of biological role, lignin degradation and detoxification of lignin-derived products. The protein is Laccase-13 (LAC13) of Arabidopsis thaliana (Mouse-ear cress).